We begin with the raw amino-acid sequence, 303 residues long: Cytosolic-abundant heat soluble protein 3 (303 aa).

Positions 1–19 (MSSRQNQQSSSQHSSSSQQ) are enriched in low complexity. The tract at residues 1 to 67 (MSSRQNQQSS…PGSHSEVHEE (67 aa)) is disordered. Positions 170 to 257 (ARQDEQDAGM…ESAKAQTNVN (88 aa)) form a coiled coil. 2 CAHS motif regions span residues 184–202 (YREEVERDAELIRQILERQ) and 221–239 (QEREIQLEAEYAMRALELE). Residues 270 to 280 (KGAIQTSADKS) show a composition bias toward polar residues. Residues 270–303 (KGAIQTSADKSSTTKTGPTTVTQIKHTEQHTERR) are disordered. The span at 282–291 (TTKTGPTTVT) shows a compositional bias: low complexity. The segment covering 294–303 (KHTEQHTERR) has biased composition (basic and acidic residues).

This sequence belongs to the Cytosolic-abundant heat soluble protein (CAHS) family.

Its subcellular location is the cytoplasm. Its function is as follows. CAHS proteins are cytosolic heat soluble proteins that seem to contribute to the anhydrobiosis in tardigrades, but their specific mechanisms are yet to be identified. It is possible that protection during anhydrobiosis might occur via the stabilization of vitrifying small molecules such as sugars, but not via the direct glass transition of CAHS proteins themselves. This is Cytosolic-abundant heat soluble protein 3 from Ramazzottius varieornatus (Water bear).